We begin with the raw amino-acid sequence, 275 residues long: MVQQLSSLRGSSAEALQVLGEQVDGDRYTLEEFAALADDLFRAAALLRSEPALRRAVTDVSTPAEAKSSLVHGLLDGKLGAPAVDLLAQAVGLRWVAARDLADAVEHLGVVAAVRSAGRRESVRLSDELFVVAQVVEENAELRIALSDPVRSTDDKRELLRGLLAQRALPATVALVEQALAGSFRSFHAAVSEYQKVAAATQGEGVALVRVARELTEAERTRLEQALSTQYGRPVHLNIEVDPSLLGGMRVEIGDDVIDGTVVSRLDDARRRLAG.

It belongs to the ATPase delta chain family. In terms of assembly, F-type ATPases have 2 components, F(1) - the catalytic core - and F(0) - the membrane proton channel. F(1) has five subunits: alpha(3), beta(3), gamma(1), delta(1), epsilon(1). F(0) has three main subunits: a(1), b(2) and c(10-14). The alpha and beta chains form an alternating ring which encloses part of the gamma chain. F(1) is attached to F(0) by a central stalk formed by the gamma and epsilon chains, while a peripheral stalk is formed by the delta and b chains.

It is found in the cell membrane. F(1)F(0) ATP synthase produces ATP from ADP in the presence of a proton or sodium gradient. F-type ATPases consist of two structural domains, F(1) containing the extramembraneous catalytic core and F(0) containing the membrane proton channel, linked together by a central stalk and a peripheral stalk. During catalysis, ATP synthesis in the catalytic domain of F(1) is coupled via a rotary mechanism of the central stalk subunits to proton translocation. Functionally, this protein is part of the stalk that links CF(0) to CF(1). It either transmits conformational changes from CF(0) to CF(1) or is implicated in proton conduction. This is ATP synthase subunit delta from Nocardioides sp. (strain ATCC BAA-499 / JS614).